The chain runs to 442 residues: Protein phosphatase 2C 3 (442 aa).

The segment at 30-100 (RFRMSPSEMN…VSISDGNSSV (71 aa)) is disordered. Residues 79-90 (PEEESVSLEDSD) are compositionally biased toward acidic residues. The region spanning 120–433 (RYGVASVCGR…DNVSVVVIDL (314 aa)) is the PPM-type phosphatase domain. Residues Asp-162, Gly-163, and Asp-339 each coordinate Mn(2+). The interval 363–401 (GRGRRRGETQTPGRRSEEEGKEEEEKVVGSRKNGKRGEI) is disordered. Positions 376–390 (RRSEEEGKEEEEKVV) are enriched in basic and acidic residues. Mn(2+) is bound at residue Asp-424.

The protein belongs to the PP2C family. Part of a K(+)-channel calcium-sensing kinase/phosphatase complex composed by a calcium sensor CBL (CBL1, CBL2, CBL3 or CBL9), a kinase CIPK (CIPK6, CIPK16 or CIPK23), a phosphatase PP2C (AIP1) and a K(+)-channel (AKT1). Interacts with AKT1 and CIPK23. Interacts with PYL8/RCAR3 in an abscisic acid-independent. Interacts with PYR1/RCAR11 in an abscisic acid-dependent manner. Requires Mg(2+) as cofactor. Mn(2+) serves as cofactor. Expressed in shoot meristem, vascular tissues of cotyledons, and in primary roots surrounding the root meristem. Highly expressed in seeds.

Its subcellular location is the cell membrane. The protein resides in the cytoplasm. It localises to the nucleus. The catalysed reaction is O-phospho-L-seryl-[protein] + H2O = L-seryl-[protein] + phosphate. It carries out the reaction O-phospho-L-threonyl-[protein] + H2O = L-threonyl-[protein] + phosphate. In terms of biological role, involved in the negative regulation of the K(+) potassium channel AKT1 by its dephosphorylation, antagonistically to CIPK proteins (e.g. CIPK23). Functions as a positive regulator of abscisic acid-mediated cell signaling during seedling growth. Involved in the regulation of seed dormancy. Acts as a negative regulator of seed dormancy by inhibiting abscisic signaling and subsequently activating gibberellic acid signaling. In Arabidopsis thaliana (Mouse-ear cress), this protein is Protein phosphatase 2C 3.